Reading from the N-terminus, the 56-residue chain is Small ribosomal subunit protein uS14B (56 aa).

Zn(2+)-binding residues include Cys-21 and Cys-24. The residue at position 25 (Ser-25) is a Phosphoserine. 2 residues coordinate Zn(2+): Cys-39 and Cys-42.

The protein belongs to the universal ribosomal protein uS14 family. As to quaternary structure, component of the small ribosomal subunit (SSU). Mature yeast ribosomes consist of a small (40S) and a large (60S) subunit. The 40S small subunit contains 1 molecule of ribosomal RNA (18S rRNA) and 33 different proteins (encoded by 57 genes). The large 60S subunit contains 3 rRNA molecules (25S, 5.8S and 5S rRNA) and 46 different proteins (encoded by 81 genes). Requires Zn(2+) as cofactor.

It is found in the cytoplasm. Functionally, component of the ribosome, a large ribonucleoprotein complex responsible for the synthesis of proteins in the cell. The small ribosomal subunit (SSU) binds messenger RNAs (mRNAs) and translates the encoded message by selecting cognate aminoacyl-transfer RNA (tRNA) molecules. The large subunit (LSU) contains the ribosomal catalytic site termed the peptidyl transferase center (PTC), which catalyzes the formation of peptide bonds, thereby polymerizing the amino acids delivered by tRNAs into a polypeptide chain. The nascent polypeptides leave the ribosome through a tunnel in the LSU and interact with protein factors that function in enzymatic processing, targeting, and the membrane insertion of nascent chains at the exit of the ribosomal tunnel. This Saccharomyces cerevisiae (strain ATCC 204508 / S288c) (Baker's yeast) protein is Small ribosomal subunit protein uS14B.